A 92-amino-acid polypeptide reads, in one-letter code: Small ribosomal subunit protein uS19 (92 aa).

It belongs to the universal ribosomal protein uS19 family.

Protein S19 forms a complex with S13 that binds strongly to the 16S ribosomal RNA. In Synechocystis sp. (strain ATCC 27184 / PCC 6803 / Kazusa), this protein is Small ribosomal subunit protein uS19 (rpsS).